A 750-amino-acid chain; its full sequence is Iron-sulfur clusters transporter ATM1, mitochondrial (750 aa).

The transit peptide at 1–16 (MFIRNVKLIKPSPVRF) directs the protein to the mitochondrion. The Mitochondrial matrix portion of the chain corresponds to 17 to 124 (ISPIPFSFPI…PKNNLNFKIR (108 aa)). 2 stretches are compositionally biased toward low complexity: residues 43-75 (TSNF…KTLS) and 87-100 (DNDT…SSEN). The interval 43–100 (TSNFKSTSSSSSLKSTSTSTSTSTSKTTPKTLSKPPPKVKPPIQDNDTTSSGSSSSEN) is disordered. Residues 125–146 (VIIALSLLVGAKILNVQVPFYF) traverse the membrane as a helical segment. The 291-residue stretch at 125–415 (VIIALSLLVG…LGSVYRELKQ (291 aa)) folds into the ABC transmembrane type-1 domain. Over 147-169 (KQIIDTMNIDWTNEVGVFSTVIG) the chain is Mitochondrial intermembrane. Residues 170 to 193 (SLILAYGGARFGAVLFGELRNAIF) traverse the membrane as a helical segment. Residues 194–242 (ASVAQSAIRRVAYNTFVKLLNMDLQFHLSRQTGGLTRAIDRGTKGISYV) are Mitochondrial matrix-facing. The chain crosses the membrane as a helical span at residues 243–266 (LSAMVFHIIPITLEISIVCGILTY). A topological domain (mitochondrial intermembrane) is located at residue asparagine 267. Residues 268–288 (YGASFAAMTFVTMLAYSIFTI) form a helical membrane-spanning segment. Residues 289-354 (QTTAWRTKFR…SSVKIATSLA (66 aa)) lie on the Mitochondrial matrix side of the membrane. Residues 294–298 (RTKFR) and 357–360 (NSGQ) contribute to the glutathione site. Residues 355–373 (FLNSGQNFIFTSALTAMMY) form a helical membrane-spanning segment. Residues 374 to 388 (MGCQGVYTGELTVGD) are Mitochondrial intermembrane-facing. The helical transmembrane segment at 389–410 (LVLINQLVFQLSVPLNFLGSVY) threads the bilayer. A glutathione-binding site is contributed by glycine 407. The Mitochondrial matrix segment spans residues 411–750 (RELKQSLLDM…LFNSQTFEKK (340 aa)). The interval 437 to 462 (PNAPPLKLNNNNNNNNNNNNNNNNSL) is disordered. A compositionally biased stretch (low complexity) spans 445–460 (NNNNNNNNNNNNNNNN). An ABC transporter domain is found at 466–702 (IRFENVSFGY…QPNSLYAQLW (237 aa)). Residues tyrosine 475 and 499-510 (GPSGSGKSTILR) contribute to the ATP site.

It belongs to the ABC transporter superfamily. ABCB family. Heavy Metal importer (TC 3.A.1.210) subfamily. In terms of assembly, homodimer.

The protein localises to the mitochondrion inner membrane. Functionally, performs an essential function in the generation of cytoplasmic iron-sulfur proteins by mediating the ATP-dependent export of Fe/S cluster precursors synthesized by NFS1 and other mitochondrial proteins. Hydrolyzes ATP. Binds glutathione and may function by transporting a glutathione-conjugated iron-sulfur compound. This Candida albicans (strain SC5314 / ATCC MYA-2876) (Yeast) protein is Iron-sulfur clusters transporter ATM1, mitochondrial.